A 507-amino-acid chain; its full sequence is Histidine ammonia-lyase (507 aa).

The segment at residues 141–143 (ASG) is a cross-link (5-imidazolinone (Ala-Gly)). Residue serine 142 is modified to 2,3-didehydroalanine (Ser).

The protein belongs to the PAL/histidase family. Contains an active site 4-methylidene-imidazol-5-one (MIO), which is formed autocatalytically by cyclization and dehydration of residues Ala-Ser-Gly.

Its subcellular location is the cytoplasm. The enzyme catalyses L-histidine = trans-urocanate + NH4(+). Its pathway is amino-acid degradation; L-histidine degradation into L-glutamate; N-formimidoyl-L-glutamate from L-histidine: step 1/3. In Burkholderia orbicola (strain MC0-3), this protein is Histidine ammonia-lyase.